We begin with the raw amino-acid sequence, 80 residues long: Exodeoxyribonuclease 7 small subunit (80 aa).

Belongs to the XseB family. In terms of assembly, heterooligomer composed of large and small subunits.

Its subcellular location is the cytoplasm. The catalysed reaction is Exonucleolytic cleavage in either 5'- to 3'- or 3'- to 5'-direction to yield nucleoside 5'-phosphates.. Functionally, bidirectionally degrades single-stranded DNA into large acid-insoluble oligonucleotides, which are then degraded further into small acid-soluble oligonucleotides. This is Exodeoxyribonuclease 7 small subunit from Aliivibrio salmonicida (strain LFI1238) (Vibrio salmonicida (strain LFI1238)).